We begin with the raw amino-acid sequence, 830 residues long: Serine/threonine-protein kinase pkn2 (830 aa).

Residues 1–605 are Cytoplasmic-facing; that stretch reads MLAPDSLVLD…GELLRQRRRE (605 aa). Residues 13–283 form the Protein kinase domain; that stretch reads FRVLRPLGSG…DALAAAHSAL (271 aa). ATP is bound by residues 19 to 27 and Lys-42; that span reads LGSGGMGEV. The Proton acceptor role is filled by Asp-135. Residues 296-326 are disordered; it reads VPQPGSGATPSSGTSVFGTGSASGSSSGPTG. Residues 299–326 show a composition bias toward low complexity; that stretch reads PGSGATPSSGTSVFGTGSASGSSSGPTG. Residues 396-511 form the Guanylate cyclase domain; sequence TVMLTDIQGF…EPMEVIEAVE (116 aa). Residues 606 to 623 form a helical membrane-spanning segment; that stretch reads AALVAGAVVLLGAGAAWL. The Periplasmic portion of the chain corresponds to 624-830; it reads SQRNDAGTRA…AIKSLKQKSD (207 aa).

It belongs to the protein kinase superfamily. Ser/Thr protein kinase family.

The protein localises to the cell membrane. The catalysed reaction is L-seryl-[protein] + ATP = O-phospho-L-seryl-[protein] + ADP + H(+). It catalyses the reaction L-threonyl-[protein] + ATP = O-phospho-L-threonyl-[protein] + ADP + H(+). In terms of biological role, regulates the activity of endogenous beta-lactamase or related enzymes, by blocking their secretion by phosphorylation, in response to an external signal yet to be identified. The protein is Serine/threonine-protein kinase pkn2 (pkn2) of Myxococcus xanthus.